The primary structure comprises 104 residues: Class I hydrophobin 12 (104 aa).

The signal sequence occupies residues 1 to 25 (MFSKATLFFTAAVVIVAAGATPTTS). Intrachain disulfides connect C27/C85, C34/C79, C35/C67, and C86/C99.

Belongs to the fungal hydrophobin family. In terms of assembly, self-assembles to form functional amyloid fibrils called rodlets. Self-assembly into fibrillar rodlets occurs spontaneously at hydrophobic:hydrophilic interfaces and the rodlets further associate laterally to form amphipathic monolayers.

The protein localises to the secreted. The protein resides in the cell wall. Aerial growth, conidiation, and dispersal of filamentous fungi in the environment rely upon a capability of their secreting small amphipathic proteins called hydrophobins (HPBs) with low sequence identity. Class I can self-assemble into an outermost layer of rodlet bundles on aerial cell surfaces, conferring cellular hydrophobicity that supports fungal growth, development and dispersal; whereas Class II form highly ordered films at water-air interfaces through intermolecular interactions but contribute nothing to the rodlet structure. Hydph12 is a class I hydrophobin involved in the formation of mycelium knots. This chain is Class I hydrophobin 12, found in Pleurotus ostreatus (strain PC15) (Oyster mushroom).